The following is a 614-amino-acid chain: Probable Xaa-Pro aminopeptidase P (614 aa).

Mn(2+) is bound by residues D411, D422, E520, and E534.

This sequence belongs to the peptidase M24B family. Mn(2+) is required as a cofactor.

The enzyme catalyses Release of any N-terminal amino acid, including proline, that is linked to proline, even from a dipeptide or tripeptide.. In terms of biological role, catalyzes the removal of a penultimate prolyl residue from the N-termini of peptides. The protein is Probable Xaa-Pro aminopeptidase P (AMPP) of Sordaria macrospora (strain ATCC MYA-333 / DSM 997 / K(L3346) / K-hell).